The following is a 608-amino-acid chain: Dolichyl-diphosphooligosaccharide--protein glycosyltransferase subunit 1 (608 aa).

Residues 1-25 form the signal peptide; that stretch reads MESPVALLLLLLLCLGALAPTPGSA. The Lumenal segment spans residues 26 to 440; the sequence is SSEAPPLVNE…FNKVLMLQEP (415 aa). Lysine 188 is modified (N6-acetyllysine). Residue asparagine 300 is glycosylated (N-linked (GlcNAc...) asparagine). Residues 441–458 form a helical membrane-spanning segment; sequence LLVVAAFYILFFTVIIYV. At 459 to 608 the chain is on the cytoplasmic side; the sequence is RLDFSITKDP…TKIDHILDAL (150 aa). An N6-acetyllysine; alternate modification is found at lysine 539. Residue lysine 539 forms a Glycyl lysine isopeptide (Lys-Gly) (interchain with G-Cter in SUMO2); alternate linkage.

The protein belongs to the OST1 family. In terms of assembly, component of the oligosaccharyltransferase (OST) complex. OST exists in two different complex forms which contain common core subunits RPN1, RPN2, OST48, OST4, DAD1 and TMEM258, either STT3A or STT3B as catalytic subunits, and form-specific accessory subunits. STT3A complex assembly occurs through the formation of 3 subcomplexes. Subcomplex 1 contains RPN1 and TMEM258, subcomplex 2 contains the STT3A-specific subunits STT3A, DC2/OSTC, and KCP2 as well as the core subunit OST4, and subcomplex 3 contains RPN2, DAD1, and OST48. The STT3A complex can form stable complexes with the Sec61 complex or with both the Sec61 and TRAP complexes. Interacts with TMEM35A/NACHO. Post-translationally, ubiquitinated by the ECS(ASB11) complex. Ubiquitinated by RNF128, leading to degradation in a proteasome/lysosome-dependent manner. In terms of processing, ufmylated by UFL1 in response to endoplasmic reticulum stress, promoting reticulophagy of endoplasmic reticulum sheets.

It localises to the endoplasmic reticulum membrane. It functions in the pathway protein modification; protein glycosylation. Functionally, subunit of the oligosaccharyl transferase (OST) complex that catalyzes the initial transfer of a defined glycan (Glc(3)Man(9)GlcNAc(2) in eukaryotes) from the lipid carrier dolichol-pyrophosphate to an asparagine residue within an Asn-X-Ser/Thr consensus motif in nascent polypeptide chains, the first step in protein N-glycosylation. N-glycosylation occurs cotranslationally and the complex associates with the Sec61 complex at the channel-forming translocon complex that mediates protein translocation across the endoplasmic reticulum (ER). All subunits are required for a maximal enzyme activity. In Mus musculus (Mouse), this protein is Dolichyl-diphosphooligosaccharide--protein glycosyltransferase subunit 1.